A 148-amino-acid polypeptide reads, in one-letter code: Deoxyuridine 5'-triphosphate nucleotidohydrolase (148 aa).

Substrate-binding positions include 67-69 (RSG), asparagine 80, 84-86 (LID), and methionine 94.

The protein belongs to the dUTPase family. The cofactor is Mg(2+).

It catalyses the reaction dUTP + H2O = dUMP + diphosphate + H(+). Its pathway is pyrimidine metabolism; dUMP biosynthesis; dUMP from dCTP (dUTP route): step 2/2. Functionally, this enzyme is involved in nucleotide metabolism: it produces dUMP, the immediate precursor of thymidine nucleotides and it decreases the intracellular concentration of dUTP so that uracil cannot be incorporated into DNA. The polypeptide is Deoxyuridine 5'-triphosphate nucleotidohydrolase (Ralstonia nicotianae (strain ATCC BAA-1114 / GMI1000) (Ralstonia solanacearum)).